The chain runs to 443 residues: Diels-Alderase poxQ (443 aa).

An N-terminal signal peptide occupies residues Met-1–Ala-23. 3 N-linked (GlcNAc...) asparagine glycosylation sites follow: Asn-78, Asn-97, and Asn-145.

Belongs to the Diels-Alderase family.

It functions in the pathway secondary metabolite biosynthesis. In terms of biological role, diels-Alderase; part of the gene cluster that mediates the biosynthesis of oxaleimides, cytotoxic compounds containing an unusual disubstituted succinimide moiety. The first step of the pathway is provided by the HR-PKS poxF that serves in a new mode of collaborative biosynthesis with the PKS-NRPS poxE, by providing the olefin containing amino acid substrate via the synthesis of an ACP-bound dec-4-enoate. The cytochrome P450 monooxygenase poxM-catalyzed oxidation at the alpha-position creates the enzyme-bound 2-hydroxydec-4-enoyl-ACP thioester, which may be prone to spontaneous hydrolysis to yield 2-hydroxydec-4-enoic acid due to increased electrophilicity of the carbonyl. 2-hydroxydec-4-enoic acid can then be further oxidized by poxM to yield the alpha-ketoacid 2-oxodec-4-enoicacid, which is reductively aminated by the aminotransferase poxL to yield (S,E)-2-aminodec-4-enoic acid. The Hybrid PKS-NRPS synthetase poxE then performs condensation between the octaketide product of its PKS modules and the amino group of (S,E)-2-aminodec-4-enoic acid which is activated and incorporated by the adenylation domain. The resulting aminoacyl product can be cyclized by the Diels-Alderase PoxQ and reductively released by the reductive (R) domain of poxE to yield an aldehyde intermediate. The released aldehyde is then substrate for a Knoevenagel condensation by the hydrolyase poxO followed by an oxidation at the 5-position of the pyrrolidone ring. The presence of the olefin from the amino acid building block allows for migration of the substituted allyl group to occur. This allylic transposition reaction takes place in a conjugate addition, semipinacol-like fashion to yield a succinimide intermediate. Iterative two-electron oxidations of the C7 methyl of the succinimide intermediate to the carboxylic acid can be catalyzed by one of two remaining cytochrome P450 monooxygenasess poxC or poxD to yield oxaleimide A. Subsequent oxidation yields the maleimide scaffold oxaleimide I. Both oxaleimide A and oxaleimide I can undergo oxidative modifications in the decalin ring to yield the series of products oxaleimides B to H. This chain is Diels-Alderase poxQ, found in Penicillium oxalicum.